Here is a 382-residue protein sequence, read N- to C-terminus: V-type proton ATPase subunit C 1 (382 aa).

Threonine 2 bears the N-acetylthreonine mark.

This sequence belongs to the V-ATPase C subunit family. V-ATPase is a heteromultimeric enzyme made up of two complexes: the ATP-hydrolytic V1 complex and the proton translocation V0 complex. The V1 complex consists of three catalytic AB heterodimers that form a heterohexamer, three peripheral stalks each consisting of EG heterodimers, one central rotor including subunits D and F, and the regulatory subunits C and H. The proton translocation complex V0 consists of the proton transport subunit a, a ring of proteolipid subunits c9c'', rotary subunit d, subunits e and f, and the accessory subunits ATP6AP1/Ac45 and ATP6AP2/PRR. Ubiquitous. Abundant in brain, liver, kidney and testis.

The protein localises to the cytoplasmic vesicle. Its subcellular location is the secretory vesicle. The protein resides in the synaptic vesicle membrane. It localises to the clathrin-coated vesicle membrane. Its function is as follows. Subunit of the V1 complex of vacuolar(H+)-ATPase (V-ATPase), a multisubunit enzyme composed of a peripheral complex (V1) that hydrolyzes ATP and a membrane integral complex (V0) that translocates protons. V-ATPase is responsible for acidifying and maintaining the pH of intracellular compartments and in some cell types, is targeted to the plasma membrane, where it is responsible for acidifying the extracellular environment. Subunit C is necessary for the assembly of the catalytic sector of the enzyme and is likely to have a specific function in its catalytic activity. This chain is V-type proton ATPase subunit C 1 (Atp6v1c1), found in Mus musculus (Mouse).